Reading from the N-terminus, the 375-residue chain is Anhydro-N-acetylmuramic acid kinase (375 aa).

13–20 lines the ATP pocket; it reads GTSMDGVD.

It belongs to the anhydro-N-acetylmuramic acid kinase family.

It catalyses the reaction 1,6-anhydro-N-acetyl-beta-muramate + ATP + H2O = N-acetyl-D-muramate 6-phosphate + ADP + H(+). It participates in amino-sugar metabolism; 1,6-anhydro-N-acetylmuramate degradation. The protein operates within cell wall biogenesis; peptidoglycan recycling. In terms of biological role, catalyzes the specific phosphorylation of 1,6-anhydro-N-acetylmuramic acid (anhMurNAc) with the simultaneous cleavage of the 1,6-anhydro ring, generating MurNAc-6-P. Is required for the utilization of anhMurNAc either imported from the medium or derived from its own cell wall murein, and thus plays a role in cell wall recycling. In Pelagibacter ubique (strain HTCC1062), this protein is Anhydro-N-acetylmuramic acid kinase.